The primary structure comprises 188 residues: Elongation factor P (188 aa).

This sequence belongs to the elongation factor P family.

It localises to the cytoplasm. It functions in the pathway protein biosynthesis; polypeptide chain elongation. Involved in peptide bond synthesis. Stimulates efficient translation and peptide-bond synthesis on native or reconstituted 70S ribosomes in vitro. Probably functions indirectly by altering the affinity of the ribosome for aminoacyl-tRNA, thus increasing their reactivity as acceptors for peptidyl transferase. In Rickettsia peacockii (strain Rustic), this protein is Elongation factor P.